We begin with the raw amino-acid sequence, 402 residues long: Argininosuccinate synthase (402 aa).

ATP contacts are provided by residues 10-18 and alanine 38; that span reads AYSGGLDTS. Tyrosine 90 lines the L-citrulline pocket. Residue glycine 120 participates in ATP binding. Threonine 122, asparagine 126, and aspartate 127 together coordinate L-aspartate. Asparagine 126 is a binding site for L-citrulline. 5 residues coordinate L-citrulline: arginine 130, serine 179, serine 188, glutamate 264, and tyrosine 276.

This sequence belongs to the argininosuccinate synthase family. Type 1 subfamily. As to quaternary structure, homotetramer.

It is found in the cytoplasm. It carries out the reaction L-citrulline + L-aspartate + ATP = 2-(N(omega)-L-arginino)succinate + AMP + diphosphate + H(+). It participates in amino-acid biosynthesis; L-arginine biosynthesis; L-arginine from L-ornithine and carbamoyl phosphate: step 2/3. The protein is Argininosuccinate synthase of Psychromonas ingrahamii (strain DSM 17664 / CCUG 51855 / 37).